A 71-amino-acid chain; its full sequence is Phosphatidylinositol N-acetylglucosaminyltransferase subunit Y (71 aa).

Residue Met1 is a topological domain, cytoplasmic. Residues 2–21 (FFSLPVLTVLIPLVSLTGLL) traverse the membrane as a helical segment. Over 22-44 (YSASVEEDFPNGCTSTASLCFYS) the chain is Lumenal. A helical transmembrane segment spans residues 45-65 (LLLPITLPVYVFFHLWTWMGL). The Cytoplasmic segment spans residues 66 to 71 (KLFRHN).

Component of the glycosylphosphatidylinositol-N-acetylglucosaminyltransferase (GPI-GnT) complex composed at least by PIGA, PIGC, PIGH, PIGP, PIGQ, PIGY and DPM2.

Its subcellular location is the endoplasmic reticulum membrane. Its pathway is glycolipid biosynthesis; glycosylphosphatidylinositol-anchor biosynthesis. Functionally, part of the glycosylphosphatidylinositol-N-acetylglucosaminyltransferase (GPI-GnT) complex that catalyzes the transfer of N-acetylglucosamine from UDP-N-acetylglucosamine to phosphatidylinositol and participates in the first step of GPI biosynthesis. May act by regulating the catalytic subunit PIGA. The chain is Phosphatidylinositol N-acetylglucosaminyltransferase subunit Y from Xenopus tropicalis (Western clawed frog).